We begin with the raw amino-acid sequence, 347 residues long: NADH-ubiquinone oxidoreductase chain 2 (347 aa).

A run of 11 helical transmembrane segments spans residues 1–21, 25–45, 59–79, 96–116, 122–142, 149–169, 178–198, 201–221, 237–257, 274–294, and 326–346; these read MNPM…FIVT, HWFM…PVLM, YFLT…INLM, MLIT…FWVP, VSLP…LSLL, VNMN…GWGG, IMAY…VYNP, SLLN…LLIF, APII…LPPL, NSVI…FFYM, and MLPL…LILL.

The protein belongs to the complex I subunit 2 family. In terms of assembly, core subunit of respiratory chain NADH dehydrogenase (Complex I) which is composed of 45 different subunits. Interacts with TMEM242.

Its subcellular location is the mitochondrion inner membrane. The catalysed reaction is a ubiquinone + NADH + 5 H(+)(in) = a ubiquinol + NAD(+) + 4 H(+)(out). In terms of biological role, core subunit of the mitochondrial membrane respiratory chain NADH dehydrogenase (Complex I) that is believed to belong to the minimal assembly required for catalysis. Complex I functions in the transfer of electrons from NADH to the respiratory chain. The immediate electron acceptor for the enzyme is believed to be ubiquinone. In Crocidura suaveolens gueldenstaedtii (Gueldenstaedt's shrew), this protein is NADH-ubiquinone oxidoreductase chain 2.